The following is a 161-amino-acid chain: RNA pyrophosphohydrolase (161 aa).

Positions 12 to 154 (PYRPGVGMMI…KRKLYQAVVK (143 aa)) constitute a Nudix hydrolase domain. Positions 46 to 67 (GGIVPGETPSIAAMREMLEEIG) match the Nudix box motif.

This sequence belongs to the Nudix hydrolase family. RppH subfamily. A divalent metal cation serves as cofactor.

Its function is as follows. Accelerates the degradation of transcripts by removing pyrophosphate from the 5'-end of triphosphorylated RNA, leading to a more labile monophosphorylated state that can stimulate subsequent ribonuclease cleavage. This Rickettsia canadensis (strain McKiel) protein is RNA pyrophosphohydrolase.